The primary structure comprises 377 residues: Succinyl-diaminopimelate desuccinylase (377 aa).

His67 is a binding site for Zn(2+). Asp69 is an active-site residue. Asp100 contributes to the Zn(2+) binding site. Glu134 acts as the Proton acceptor in catalysis. The Zn(2+) site is built by Glu135, Glu163, and His349.

Homodimer. Requires Zn(2+) as cofactor.

The catalysed reaction is N-succinyl-(2S,6S)-2,6-diaminopimelate + H2O = (2S,6S)-2,6-diaminopimelate + succinate. It participates in amino-acid biosynthesis; L-lysine biosynthesis via DAP pathway; LL-2,6-diaminopimelate from (S)-tetrahydrodipicolinate (succinylase route): step 3/3. Competitively inhibited by L,L-DAP, D,L-DAP, 2-carboxyethylphosphonic acid (CEPA) and 5-mercaptopentanoic acid (MSPA). Succinate is a poor inhibitor. Its function is as follows. Catalyzes the hydrolysis of N-succinyl-L,L-diaminopimelic acid (SDAP), forming succinate and LL-2,6-diaminopimelate (DAP), an intermediate involved in the bacterial biosynthesis of lysine and meso-diaminopimelic acid, an essential component of bacterial cell walls. It can only hydrolyze L,L-N-succinyl-diaminopimelic acid (L,L-SDAP) and is inactive toward D,L-, L,D-, and D,D-SDAP. This is Succinyl-diaminopimelate desuccinylase (dapE) from Haemophilus influenzae (strain ATCC 51907 / DSM 11121 / KW20 / Rd).